We begin with the raw amino-acid sequence, 380 residues long: Phthiodiolone/phenolphthiodiolone dimycocerosates ketoreductase (380 aa).

It belongs to the mer family. Phthiodiolone/phenolphthiodiolone dimycocerosates ketoreductase subfamily.

Functionally, catalyzes the reduction of the keto moiety of phthiodiolone dimycocerosates (DIM B) and glycosylated phenolphthiodiolone dimycocerosates to form the intermediate compounds phthiotriol and glycosylated phenolphthiotriol dimycocerosates during phthiocerol dimycocerosates (DIM A) and glycosylated phenolphthiocerol dimycocerosates (PGL) biosynthesis. The polypeptide is Phthiodiolone/phenolphthiodiolone dimycocerosates ketoreductase (Mycobacterium sp. (strain JLS)).